The chain runs to 1111 residues: Probable arabinosyltransferase A (1111 aa).

A run of 13 helical transmembrane segments spans residues 12-34 (IIRL…VPLL), 205-224 (IAVG…LSAL), 333-355 (VWMR…HWVL), 370-387 (VAVL…LPFN), 394-413 (PLIA…AIAL), 423-445 (AVVA…ALLT), 462-484 (GLLA…VFHS), 530-547 (FPVL…VVLL), 554-576 (GLAS…LLTF), 581-603 (WAIQ…AFAF), 615-637 (TVYI…GWFG), 652-674 (IAGH…LAGG), and 695-717 (FLAT…GSLA). The segment at 804–831 (GLVNSDASPNKPNVTFSDSAGTAGGKGP) is disordered. The segment covering 808–823 (SDASPNKPNVTFSDSA) has biased composition (polar residues).

It belongs to the emb family.

The protein resides in the cell membrane. Arabinosyl transferase responsible for the polymerization of arabinose into the arabinan of arabinogalactan. The sequence is that of Probable arabinosyltransferase A (embA) from Mycobacterium leprae (strain TN).